The primary structure comprises 264 residues: [LysW]-aminoadipate/[LysW]-glutamate kinase (264 aa).

Residues 35 to 36 (GG), R62, and N167 contribute to the substrate site.

The protein belongs to the acetylglutamate kinase family. LysZ subfamily.

Its subcellular location is the cytoplasm. It carries out the reaction [amino-group carrier protein]-C-terminal-N-(1,4-dicarboxybutan-1-yl)-L-glutamine + ATP = [amino-group carrier protein]-C-terminal-N-(1-carboxy-5-phosphooxy-5-oxopentan-1-yl)-L-glutamine + ADP. It catalyses the reaction [amino-group carrier protein]-C-terminal-gamma-(L-glutamyl)-L-glutamate + ATP = [amino-group carrier protein]-C-terminal-gamma-(5-phospho-L-glutamyl)-L-glutamate + ADP. Its pathway is amino-acid biosynthesis; L-lysine biosynthesis via AAA pathway; L-lysine from L-alpha-aminoadipate (Thermus route): step 2/5. It participates in amino-acid biosynthesis; L-arginine biosynthesis. In terms of biological role, involved in both the arginine and lysine biosynthetic pathways. Phosphorylates the LysW-bound precursors glutamate (for arginine biosynthesis), respectively alpha-aminoadipate (for lysine biosynthesis). The sequence is that of [LysW]-aminoadipate/[LysW]-glutamate kinase from Saccharolobus islandicus (strain Y.N.15.51 / Yellowstone #2) (Sulfolobus islandicus).